The following is a 393-amino-acid chain: Protein TsgA (393 aa).

At 1-10 the chain is on the cytoplasmic side; sequence MTNSNRIKLT. The helical transmembrane segment at 11–31 threads the bilayer; that stretch reads WISFLSYALTGALVIVTGMVM. At 32 to 50 the chain is on the periplasmic side; that stretch reads GNIADYFHLPVSSMSNTFT. The helical transmembrane segment at 51–71 threads the bilayer; sequence FLNAGILISIFLNAWLMEIIP. The Cytoplasmic portion of the chain corresponds to 72–77; sequence LKTQLR. Residues 78–98 form a helical membrane-spanning segment; the sequence is FGFILMVLAVAGLMFGHSLAL. At 99-100 the chain is on the periplasmic side; it reads FS. A helical transmembrane segment spans residues 101 to 121; it reads AAMFVLGLVSGITMSIGTFLI. Topologically, residues 122-133 are cytoplasmic; it reads TQLYEGRQRGSR. A helical transmembrane segment spans residues 134–154; it reads LLFTDSFFSMAGMIFPMVAAF. Topologically, residues 155–161 are periplasmic; sequence LLARSIE. A helical transmembrane segment spans residues 162–182; that stretch reads WYWVYACIGLVYLAIFILTFG. Residues 183-205 are Cytoplasmic-facing; it reads CEFPALGKHAQHSQAPVVKEKWG. The chain crosses the membrane as a helical span at residues 206-226; the sequence is IGVLFLAVAALCYILGQLGFI. Over 227–244 the chain is Periplasmic; sequence SWVPEYAKGLGMSLNDAG. A helical membrane pass occupies residues 245–265; it reads ALVSDFWMSYMFGMWAFSFIL. The Cytoplasmic portion of the chain corresponds to 266–272; it reads RFFDLQR. The helical transmembrane segment at 273–293 threads the bilayer; the sequence is ILTVLAGMAAVLMYLFITGTQ. The Periplasmic portion of the chain corresponds to 294 to 297; that stretch reads AHMP. A helical transmembrane segment spans residues 298-318; that stretch reads WFILTLGFFSSAIYTSIITLG. Topologically, residues 319 to 331 are cytoplasmic; it reads SQQTKVASPKLVN. A helical transmembrane segment spans residues 332–352; the sequence is FILTCGTIGTMLTFVVTGPIV. Topologically, residues 353–360 are periplasmic; sequence AHSGPQAA. Residues 361–381 form a helical membrane-spanning segment; sequence LLTANGLYAVVFVMCFALGFV. Topologically, residues 382-393 are cytoplasmic; the sequence is SRHRQHSAPATH.

Belongs to the major facilitator superfamily. TsgA family.

The protein localises to the cell inner membrane. This Salmonella choleraesuis (strain SC-B67) protein is Protein TsgA.